A 201-amino-acid chain; its full sequence is FMN-dependent NADH:quinone oxidoreductase (201 aa).

Residues S10, S16–S18, M96–F99, and S140–G143 contribute to the FMN site.

Belongs to the azoreductase type 1 family. In terms of assembly, homodimer. It depends on FMN as a cofactor.

The enzyme catalyses 2 a quinone + NADH + H(+) = 2 a 1,4-benzosemiquinone + NAD(+). The catalysed reaction is N,N-dimethyl-1,4-phenylenediamine + anthranilate + 2 NAD(+) = 2-(4-dimethylaminophenyl)diazenylbenzoate + 2 NADH + 2 H(+). Its function is as follows. Quinone reductase that provides resistance to thiol-specific stress caused by electrophilic quinones. Functionally, also exhibits azoreductase activity. Catalyzes the reductive cleavage of the azo bond in aromatic azo compounds to the corresponding amines. The protein is FMN-dependent NADH:quinone oxidoreductase of Escherichia coli O157:H7.